Here is a 245-residue protein sequence, read N- to C-terminus: Thymidylate kinase (245 aa).

Position 55-62 (55-62) interacts with ATP; the sequence is GIDGVGKS.

Belongs to the thymidylate kinase family.

The catalysed reaction is dTMP + ATP = dTDP + ADP. In terms of biological role, phosphorylation of dTMP to form dTDP in both de novo and salvage pathways of dTTP synthesis. This is Thymidylate kinase from Rhodopirellula baltica (strain DSM 10527 / NCIMB 13988 / SH1).